Reading from the N-terminus, the 533-residue chain is Calcium-dependent protein kinase 8 (533 aa).

The segment at methionine 1 to isoleucine 21 is disordered. The N-myristoyl glycine moiety is linked to residue glycine 2. One can recognise a Protein kinase domain in the interval tyrosine 57 to isoleucine 315. ATP contacts are provided by residues valine 63–threonine 71 and lysine 86. Catalysis depends on aspartate 181, which acts as the Proton acceptor. Serine 221 carries the phosphoserine modification. The interval alanine 321–isoleucine 351 is autoinhibitory domain. 4 EF-hand domains span residues glutamate 358–glutamine 394, isoleucine 395–methionine 430, alanine 431–threonine 466, and asparagine 467–tryptophan 502. Positions 371, 375, 377, 382, 408, 410, 412, 414, 419, 444, 446, 448, 450, 455, 480, 482, 484, and 486 each coordinate Ca(2+). Serine 488 carries the phosphoserine modification. Glutamate 491 serves as a coordination point for Ca(2+). Serine 526 is subject to Phosphoserine.

The protein belongs to the protein kinase superfamily. Ser/Thr protein kinase family. CDPK subfamily.

The protein resides in the cell membrane. It carries out the reaction L-seryl-[protein] + ATP = O-phospho-L-seryl-[protein] + ADP + H(+). The catalysed reaction is L-threonyl-[protein] + ATP = O-phospho-L-threonyl-[protein] + ADP + H(+). Activated by calcium. Autophosphorylation may play an important role in the regulation of the kinase activity. In terms of biological role, may play a role in signal transduction pathways that involve calcium as a second messenger. The chain is Calcium-dependent protein kinase 8 (CPK8) from Arabidopsis thaliana (Mouse-ear cress).